We begin with the raw amino-acid sequence, 541 residues long: Putative ammonium transporter sll0537 (541 aa).

The next 11 membrane-spanning stretches (helical) occupy residues 6 to 26, 44 to 64, 86 to 106, 117 to 137, 161 to 181, 203 to 223, 235 to 255, 260 to 280, 283 to 303, 316 to 336, and 356 to 376; these read TLWLLLCAGLVFFMQAGFMCL, FADFGISVALFWSFGFSIMFG, LAVFFLFQAMFCGTATTIISG, YLLVAGLASGLIYPLFGDWAW, FAGSTVVHSVGAWIGLATILV, MPFSVLGTLILWFGWLGFNGG, IMVNTVLAGVGGMLMAGLISL, MIQVEPLMNGSLAGLVAITAS, VVMTPIAMVIGATGSAIAYLV, VDAVAVHGGAGVWGTLCVGLF, and LLGIGVCTLWAFGLAWVFLTL.

Belongs to the ammonia transporter channel (TC 1.A.11.2) family.

Its subcellular location is the cell membrane. This is Putative ammonium transporter sll0537 from Synechocystis sp. (strain ATCC 27184 / PCC 6803 / Kazusa).